The chain runs to 292 residues: GID complex substrate-recognition subunit 10 (292 aa).

It belongs to the GID4/VID24 family. As to quaternary structure, substrate-recognition component of the GID/CTLH ubiquitin ligase complex. In the absence of stress, the complex exists as an inactive anticipatory complex (GID(Ant)), composed of VID30/GID1, the E3 ubiquitin-ligase RMD5/GID2, VID28/GID5, GID8, and the RING-like subunit FYV10/GID9, awaiting a substrate receptor to form the active E3 ligase complex. When cells are shifted to glucose-containing medium, the substrate receptor VID24/GID4 is induced and becomes part of the complex, named GID(SR4). Under osmotic or heat stress, the substrate receptor GID10 is induced and becomes part of the complex, named GID(SR10). Interacts with proteins that have an N-terminal Pro/N-degron, including ART2.

Its function is as follows. Substrate-recognition component of the GID E3 ligase complex recruiting N termini and catalyzing ubiquitination of proteins targeted for degradation. GID E3 is regulated through assembly with interchangeable N-degron-binding substrate receptors induced by distinct environmental perturbations. Required for the adaptation to osmotic or heat stress. Required for the regulation of protein levels of the adapter protein ART2, a component of the ART-Rsp5 ubiquitin ligase pathway, part of the plasma membrane quality control. Specific for substrates with an N-terminal Pro (Pro/N-degron), including ART2. Has high affinity for the N-terminal sequence Pro-Tyr-Ile-Thr, and also recognizes nonproline residues such as Met-Tyr-Ile-Thr-Val or Val-Cys-Phe-His. In Saccharomyces cerevisiae (strain ATCC 204508 / S288c) (Baker's yeast), this protein is GID complex substrate-recognition subunit 10.